A 605-amino-acid chain; its full sequence is Isocitrate dehydrogenase kinase/phosphatase (605 aa).

Residues 353–359 and Lys-374 each bind ATP; that span reads APGFKGT. Residue Asp-413 is part of the active site.

This sequence belongs to the AceK family.

It localises to the cytoplasm. The enzyme catalyses L-seryl-[isocitrate dehydrogenase] + ATP = O-phospho-L-seryl-[isocitrate dehydrogenase] + ADP + H(+). Bifunctional enzyme which can phosphorylate or dephosphorylate isocitrate dehydrogenase (IDH) on a specific serine residue. This is a regulatory mechanism which enables bacteria to bypass the Krebs cycle via the glyoxylate shunt in response to the source of carbon. When bacteria are grown on glucose, IDH is fully active and unphosphorylated, but when grown on acetate or ethanol, the activity of IDH declines drastically concomitant with its phosphorylation. This chain is Isocitrate dehydrogenase kinase/phosphatase, found in Rhodopseudomonas palustris (strain HaA2).